The sequence spans 188 residues: Peptide deformylase (188 aa).

2 residues coordinate Fe cation: C94 and H136. The active site involves E137. H140 lines the Fe cation pocket.

The protein belongs to the polypeptide deformylase family. Fe(2+) is required as a cofactor.

The enzyme catalyses N-terminal N-formyl-L-methionyl-[peptide] + H2O = N-terminal L-methionyl-[peptide] + formate. Its function is as follows. Removes the formyl group from the N-terminal Met of newly synthesized proteins. Requires at least a dipeptide for an efficient rate of reaction. N-terminal L-methionine is a prerequisite for activity but the enzyme has broad specificity at other positions. This Chlorobium phaeobacteroides (strain DSM 266 / SMG 266 / 2430) protein is Peptide deformylase.